A 169-amino-acid polypeptide reads, in one-letter code: Cell division inhibitor SulA (169 aa).

A compositionally biased stretch (polar residues) spans Met1–Ser16. The tract at residues Met1–Pro20 is disordered. The interval Ala106–Tyr112 is ftsZ binding. The tract at residues Lys162–His169 is lon protease binding.

It belongs to the SulA family. As to quaternary structure, interacts with FtsZ. Post-translationally, is rapidly cleaved and degraded by the Lon protease once DNA damage is repaired.

Component of the SOS system and an inhibitor of cell division. Accumulation of SulA causes rapid cessation of cell division and the appearance of long, non-septate filaments. In the presence of GTP, binds a polymerization-competent form of FtsZ in a 1:1 ratio, thus inhibiting FtsZ polymerization and therefore preventing it from participating in the assembly of the Z ring. This mechanism prevents the premature segregation of damaged DNA to daughter cells during cell division. In Klebsiella aerogenes (Enterobacter aerogenes), this protein is Cell division inhibitor SulA.